Consider the following 93-residue polypeptide: UPF0298 protein lwe2074 (93 aa).

This sequence belongs to the UPF0298 family.

Its subcellular location is the cytoplasm. This Listeria welshimeri serovar 6b (strain ATCC 35897 / DSM 20650 / CCUG 15529 / CIP 8149 / NCTC 11857 / SLCC 5334 / V8) protein is UPF0298 protein lwe2074.